A 305-amino-acid chain; its full sequence is Homoserine O-acetyltransferase (305 aa).

The active-site Acyl-thioester intermediate is Cys-142. Positions 163 and 192 each coordinate substrate. The active-site Proton acceptor is the His-235. Glu-237 is an active-site residue. Arg-249 is a substrate binding site.

Belongs to the MetA family.

It localises to the cytoplasm. The enzyme catalyses L-homoserine + acetyl-CoA = O-acetyl-L-homoserine + CoA. The protein operates within amino-acid biosynthesis; L-methionine biosynthesis via de novo pathway; O-acetyl-L-homoserine from L-homoserine: step 1/1. Its function is as follows. Transfers an acetyl group from acetyl-CoA to L-homoserine, forming acetyl-L-homoserine. This chain is Homoserine O-acetyltransferase, found in Bacteroides fragilis (strain ATCC 25285 / DSM 2151 / CCUG 4856 / JCM 11019 / LMG 10263 / NCTC 9343 / Onslow / VPI 2553 / EN-2).